Here is a 288-residue protein sequence, read N- to C-terminus: Bifunctional protein FolD (288 aa).

NADP(+)-binding positions include 166–168 (GAS) and Ile232.

Belongs to the tetrahydrofolate dehydrogenase/cyclohydrolase family. In terms of assembly, homodimer.

The catalysed reaction is (6R)-5,10-methylene-5,6,7,8-tetrahydrofolate + NADP(+) = (6R)-5,10-methenyltetrahydrofolate + NADPH. It catalyses the reaction (6R)-5,10-methenyltetrahydrofolate + H2O = (6R)-10-formyltetrahydrofolate + H(+). It participates in one-carbon metabolism; tetrahydrofolate interconversion. In terms of biological role, catalyzes the oxidation of 5,10-methylenetetrahydrofolate to 5,10-methenyltetrahydrofolate and then the hydrolysis of 5,10-methenyltetrahydrofolate to 10-formyltetrahydrofolate. This is Bifunctional protein FolD from Escherichia coli O139:H28 (strain E24377A / ETEC).